Here is a 233-residue protein sequence, read N- to C-terminus: 2,3,4,5-tetrahydropyridine-2,6-dicarboxylate N-acetyltransferase (233 aa).

It belongs to the transferase hexapeptide repeat family. DapH subfamily.

It carries out the reaction (S)-2,3,4,5-tetrahydrodipicolinate + acetyl-CoA + H2O = L-2-acetamido-6-oxoheptanedioate + CoA. The protein operates within amino-acid biosynthesis; L-lysine biosynthesis via DAP pathway; LL-2,6-diaminopimelate from (S)-tetrahydrodipicolinate (acetylase route): step 1/3. Functionally, catalyzes the transfer of an acetyl group from acetyl-CoA to tetrahydrodipicolinate. The polypeptide is 2,3,4,5-tetrahydropyridine-2,6-dicarboxylate N-acetyltransferase (Thermotoga petrophila (strain ATCC BAA-488 / DSM 13995 / JCM 10881 / RKU-1)).